Consider the following 155-residue polypeptide: Cyanate hydratase (155 aa).

Active-site residues include R92, E95, and S118.

It belongs to the cyanase family.

It carries out the reaction cyanate + hydrogencarbonate + 3 H(+) = NH4(+) + 2 CO2. Its function is as follows. Catalyzes the reaction of cyanate with bicarbonate to produce ammonia and carbon dioxide. This is Cyanate hydratase from Mycobacterium avium (strain 104).